The primary structure comprises 312 residues: MTVNLEEYFRTTFEDKLLVKMPEREDDHLTPATRLLEKRREMSEVEQALGAQKEEFQMKMESLQQRREELERKEYQLRESLLKFDKFLKENDSKRARALKKAQEERDMRRAKDCEIARLKEDTSGLMKGRDKVQHRLEKYIIYQQYLEKVLENAEEFQEIREIIARYDTLTATHQDLLERELKNQEKYEKEKARLIKFTEEKNNEILNYNNQLANLQTKLEKTQSVAVKWESQWTHIKNTAAKKTLLLGRIKMATHNLFMLVNRHLGQTGMVDMTDKQLDKIQVFIQDLTQITLDIKRAENAITASGANTAG.

Coiled-coil stretches lie at residues 34–121 (RLLE…RLKE) and 172–233 (ATHQ…WESQ).

The protein belongs to the CFAP73 family.

This is Coiled-coil domain-containing protein 42 homolog from Nematostella vectensis (Starlet sea anemone).